The following is a 435-amino-acid chain: Zinc finger CCCH domain-containing protein 16 (435 aa).

Residues 1–27 (MRKELCRNFQRGSCRYGENCRFLHPQQ) form a C3H1-type zinc finger. A 6 X 2 AA repeats of F-G region spans residues 2–88 (RKELCRNFQR…ASTPTGGGAA (87 aa)). Disordered stretches follow at residues 25 to 105 (PQQA…DHKC) and 205 to 374 (TPSI…SQNN). Tandem repeats lie at residues 34–35 (FG) and 36–37 (FG). Residues 39–51 (QNQQQQQQQQQQN) show a composition bias toward low complexity. Tandem repeats lie at residues 56–57 (FG) and 58–59 (FG). The span at 63 to 77 (GGSSRPNQFQNTWSR) shows a compositional bias: polar residues. Residues 78–99 (TASTPTGGGAAASTQQTGKQTQ) are compositionally biased toward low complexity. Composition is skewed to polar residues over residues 205 to 320 (TPSI…VNTP) and 328 to 339 (SGFQTNPSTTFK). 2 tandem repeats follow at residues 343–344 (FG) and 359–360 (FG). Residues 351 to 374 (TTPQNNNIFGQSTPTPATNTSQNN) show a composition bias toward polar residues.

In terms of assembly, part of the nuclear pore complex (NPC). The NPC has an eight-fold symmetrical structure comprising a central transport channel and two rings, the cytoplasmic and nuclear rings, to which eight filaments are attached. The cytoplasmic filaments have loose ends, while the nuclear filaments are joined in a distal ring, forming a nuclear basket. NPCs are highly dynamic in configuration and composition, and can be devided in 3 subcomplexes, the NUP62 subcomplex, the NUP107-160 subcomplex and the NUP93 subcomplex, containing approximately 30 different nucleoporin proteins.

The protein resides in the nucleus envelope. The protein localises to the nucleus. It is found in the nuclear pore complex. This Arabidopsis thaliana (Mouse-ear cress) protein is Zinc finger CCCH domain-containing protein 16.